We begin with the raw amino-acid sequence, 216 residues long: Glutathione S-transferase D5 (216 aa).

One can recognise a GST N-terminal domain in the interval Met1–Asp80. Glutathione-binding positions include His50–Ile52 and Glu64–Arg66. The GST C-terminal domain maps to Asp86 to Phe207.

The protein belongs to the GST superfamily. Delta family. As to quaternary structure, homodimer.

The catalysed reaction is RX + glutathione = an S-substituted glutathione + a halide anion + H(+). In terms of biological role, conjugation of reduced glutathione to a wide number of exogenous and endogenous hydrophobic electrophiles. May be involved in detoxification. This Drosophila melanogaster (Fruit fly) protein is Glutathione S-transferase D5.